A 264-amino-acid polypeptide reads, in one-letter code: Thymidylate synthase (264 aa).

Residue Arg-21 participates in dUMP binding. His-51 contributes to the (6R)-5,10-methylene-5,6,7,8-tetrahydrofolate binding site. 126–127 serves as a coordination point for dUMP; that stretch reads RR. The active-site Nucleophile is the Cys-146. DUMP contacts are provided by residues 166 to 169, Asn-177, and 207 to 209; these read RSAD and HLY. Asp-169 contacts (6R)-5,10-methylene-5,6,7,8-tetrahydrofolate. Ala-263 provides a ligand contact to (6R)-5,10-methylene-5,6,7,8-tetrahydrofolate.

This sequence belongs to the thymidylate synthase family. Bacterial-type ThyA subfamily. As to quaternary structure, homodimer.

It is found in the cytoplasm. The enzyme catalyses dUMP + (6R)-5,10-methylene-5,6,7,8-tetrahydrofolate = 7,8-dihydrofolate + dTMP. It functions in the pathway pyrimidine metabolism; dTTP biosynthesis. Its function is as follows. Catalyzes the reductive methylation of 2'-deoxyuridine-5'-monophosphate (dUMP) to 2'-deoxythymidine-5'-monophosphate (dTMP) while utilizing 5,10-methylenetetrahydrofolate (mTHF) as the methyl donor and reductant in the reaction, yielding dihydrofolate (DHF) as a by-product. This enzymatic reaction provides an intracellular de novo source of dTMP, an essential precursor for DNA biosynthesis. The chain is Thymidylate synthase from Methylobacterium nodulans (strain LMG 21967 / CNCM I-2342 / ORS 2060).